A 522-amino-acid chain; its full sequence is Amphoterin-induced protein 2 (522 aa).

Positions Met-1 to Gly-39 are cleaved as a signal peptide. The 29-residue stretch at Val-40 to Arg-68 folds into the LRRNT domain. Residues Val-40–Thr-398 are Extracellular-facing. Intrachain disulfides connect Cys-41/Cys-47 and Cys-45/Cys-54. LRR repeat units lie at residues Leu-69–Val-90, Lys-94–Thr-115, Asn-118–Glu-139, Val-142–Gly-163, Gln-166–Gly-187, and Glu-193–Leu-214. Asn-104 carries an N-linked (GlcNAc...) asparagine glycan. Residues Asn-228–Asp-284 form the LRRCT domain. Cystine bridges form between Cys-232–Cys-260 and Cys-234–Cys-282. N-linked (GlcNAc...) asparagine glycosylation is found at Asn-281, Asn-288, Asn-345, Asn-373, Asn-381, and Asn-384. Positions Gly-289–Thr-379 constitute an Ig-like C2-type domain. Cys-310 and Cys-363 are disulfide-bonded. Residues Ala-399–Leu-419 form a helical membrane-spanning segment. Over Thr-420–Thr-522 the chain is Cytoplasmic. A disordered region spans residues Arg-501–Thr-522.

This sequence belongs to the immunoglobulin superfamily. AMIGO family. Binds itself as well as AMIGO1 and AMIGO3.

It localises to the cell membrane. Its subcellular location is the nucleus. In terms of biological role, required for depolarization-dependent survival of cultured cerebellar granule neurons. May mediate homophilic as well as heterophilic cell-cell interaction with AMIGO1 or AMIGO3. May contribute to signal transduction through its intracellular domain. In Pongo abelii (Sumatran orangutan), this protein is Amphoterin-induced protein 2.